We begin with the raw amino-acid sequence, 180 residues long: Negative modulator of initiation of replication (180 aa).

Residues 115–119 (RTRVY) are interaction with DNA.

Belongs to the SeqA family. In terms of assembly, homodimer. Polymerizes to form helical filaments.

It is found in the cytoplasm. Functionally, negative regulator of replication initiation, which contributes to regulation of DNA replication and ensures that replication initiation occurs exactly once per chromosome per cell cycle. Binds to pairs of hemimethylated GATC sequences in the oriC region, thus preventing assembly of replication proteins and re-initiation at newly replicated origins. Repression is relieved when the region becomes fully methylated. This is Negative modulator of initiation of replication from Aliivibrio fischeri (strain ATCC 700601 / ES114) (Vibrio fischeri).